The sequence spans 88 residues: uncharacterized protein (88 aa).

This sequence to E.coli YihD.

This is an uncharacterized protein from Haemophilus influenzae (strain ATCC 51907 / DSM 11121 / KW20 / Rd).